Here is a 92-residue protein sequence, read N- to C-terminus: SPbeta prophage-derived uncharacterized protein YopY (92 aa).

The sequence is that of SPbeta prophage-derived uncharacterized protein YopY (yopY) from Bacillus subtilis (strain 168).